The chain runs to 453 residues: Cyclic GMP-AMP phosphodiesterase SMPDL3A (453 aa).

An N-terminal signal peptide occupies residues 1–22 (MALVRALVCCLLTAWHCRSGLG). Positions 45 and 47 each coordinate Zn(2+). Cysteines 62 and 81 form a disulfide. A glycan (N-linked (GlcNAc...) asparagine) is linked at Asn-69. Asp-110 is a binding site for Zn(2+). An ATP-binding site is contributed by His-114. An N-linked (GlcNAc...) asparagine glycan is attached at Asn-131. Asn-151 contacts Zn(2+). ATP contacts are provided by Asn-151 and His-152. N-linked (GlcNAc...) asparagine glycosylation is found at Asn-222 and Asn-238. Position 252 (His-252) interacts with Zn(2+). Asn-263 carries N-linked (GlcNAc...) asparagine glycosylation. Residues His-293 and His-295 each contribute to the Zn(2+) site. The N-linked (GlcNAc...) asparagine glycan is linked to Asn-356. 2 cysteine pairs are disulfide-bonded: Cys-420–Cys-424 and Cys-430–Cys-443. An N-linked (GlcNAc...) asparagine glycan is attached at Asn-437.

The protein belongs to the acid sphingomyelinase family. In terms of assembly, monomer. Homodimer; homodimerizes following 2',3'-cGAMP-binding. Zn(2+) serves as cofactor. In terms of processing, N-glycosylation is required for protein maturation, secretion and phosphodiesterase activity. Detected in blood serum. Detected in macrophages (at protein level).

It localises to the secreted. It carries out the reaction 2',3'-cGAMP + H2O = 5'-pGpA(2'-5') + H(+). The catalysed reaction is 5'-pGpA(2'-5') + H2O = 5'-GpA(2'-5') + phosphate. It catalyses the reaction a ribonucleoside 5'-triphosphate + H2O = a ribonucleoside 5'-diphosphate + phosphate + H(+). The enzyme catalyses ATP + H2O = ADP + phosphate + H(+). With respect to regulation, requires micromolar levels of Zn(2+) for activity. Inhibited by millimolar levels of Zn(2+). Cyclic-nucleotide phosphodiesterase that acts as a negative regulator of innate immunity by mediating degradation of 2',3'-cGAMP, thereby inhibiting the cGAS-STING signaling. Specifically linearizes 2',3'-cGAMP into 2'5'-bond pGpA and further hydrolyzes pGpA to produce GpA. Also has in vitro nucleotide phosphodiesterase activity with nucleoside triphosphates, such as ATP. Has in vitro activity with p-nitrophenyl-TMP. Has lower activity with nucleoside diphosphates, and no activity with nucleoside monophosphates. Has in vitro activity with CDP-choline, giving rise to CMP and phosphocholine. Has in vitro activity with CDP-ethanolamine. Does not have sphingomyelin phosphodiesterase activity. The sequence is that of Cyclic GMP-AMP phosphodiesterase SMPDL3A from Homo sapiens (Human).